The following is a 488-amino-acid chain: Probable cytosol aminopeptidase (488 aa).

Mn(2+)-binding residues include lysine 253 and aspartate 258. The active site involves lysine 265. Residues aspartate 276, aspartate 335, and glutamate 337 each contribute to the Mn(2+) site. Arginine 339 is an active-site residue.

The protein belongs to the peptidase M17 family. Mn(2+) serves as cofactor.

Its subcellular location is the cytoplasm. It catalyses the reaction Release of an N-terminal amino acid, Xaa-|-Yaa-, in which Xaa is preferably Leu, but may be other amino acids including Pro although not Arg or Lys, and Yaa may be Pro. Amino acid amides and methyl esters are also readily hydrolyzed, but rates on arylamides are exceedingly low.. The catalysed reaction is Release of an N-terminal amino acid, preferentially leucine, but not glutamic or aspartic acids.. Its function is as follows. Presumably involved in the processing and regular turnover of intracellular proteins. Catalyzes the removal of unsubstituted N-terminal amino acids from various peptides. The protein is Probable cytosol aminopeptidase of Dinoroseobacter shibae (strain DSM 16493 / NCIMB 14021 / DFL 12).